Reading from the N-terminus, the 355-residue chain is Inositol polyphosphate multikinase (355 aa).

Met-1 carries the N-acetylmethionine modification. Position 31 (Lys-31) interacts with ATP. Residue Ser-97 is modified to Phosphoserine. Residues 118–120 and Asp-131 contribute to the ATP site; that span reads ENL. 127 to 135 is a substrate binding site; sequence PNILDIKLG. Positions 271 and 274 each coordinate Ca(2+). Over residues 284–304 the composition is skewed to acidic residues; sequence FIDDDDDDDDNDDDDDDDAEG. Residues 284–317 form a disordered region; the sequence is FIDDDDDDDDNDDDDDDDAEGSSEGPKDKKTTGS. Asp-325 is an ATP binding site. Residue Gly-334 coordinates Ca(2+).

Belongs to the inositol phosphokinase (IPK) family. Interacts with ARG80 and MCM1. Requires Ca(2+) as cofactor.

It is found in the nucleus. The catalysed reaction is 1D-myo-inositol 1,4,5-trisphosphate + 2 ATP = 1D-myo-inositol 1,3,4,5,6-pentakisphosphate + 2 ADP + 2 H(+). It carries out the reaction 1D-myo-inositol 1,4,5-trisphosphate + ATP = 1D-myo-inositol 1,4,5,6-tetrakisphosphate + ADP + H(+). The enzyme catalyses 1D-myo-inositol 1,4,5-trisphosphate + ATP = 1D-myo-inositol 1,3,4,5-tetrakisphosphate + ADP + H(+). It catalyses the reaction 1D-myo-inositol 1,4,5,6-tetrakisphosphate + ATP = 1D-myo-inositol 1,3,4,5,6-pentakisphosphate + ADP + H(+). The catalysed reaction is a 1,2-diacyl-sn-glycero-3-phospho-(1D-myo-inositol-4,5-bisphosphate) + ATP = a 1,2-diacyl-sn-glycero-3-phospho-(1D-myo-inositol-3,4,5-trisphosphate) + ADP + H(+). Its function is as follows. Inositol phosphate kinase with both monophosphoinositol and diphosphoinositol polyphosphate synthase activities. Able to phosphorylate inositol 1,4,5-trisphosphate (Ins(1,4,5)P3) on both the carbon-3 and carbon-6 positions to synthesize inositol 1,3,4,5-tetrakisphosphate (Ins(1,3,4,5)P4) and inositol 1,4,5,6-tetrakisphosphate (Ins(1,4,5,6)P4), and then to subsequently phosphorylate and convert either isomer of InsP4 to inositol 1,3,4,5,6-pentakisphosphate (Ins(1,3,4,5,6)P5). Its predominant in vivo catalytic function is to convert Ins(1,4,5)P3 to Ins(1,4,5,6)P4 to Ins(1,3,4,5,6)P5 via 6- and 3-kinase activities. It can also use Ins(1,3,4,5,6)P5 as a substrate and act as a diphosphoinositol polyphosphate synthase to generate two different isomers of PP-InsP4. Also has a role in transcription regulation. Forms a complex with ARG80, ARG81 and MCM1 (ArgR-MCM1), which coordinates the expression of arginine anabolic and catabolic genes in response to arginine. Recruits ARG80 and MCM21 to stabilize them. Neither the kinase activity nor inositol phosphates are required for the formation of ArgR-MCM1 transcriptional complexes on DNA promoter elements and the control of arginine metabolism. In contrast, only the catalytic activity is required for PHO gene repression by phosphate and for NCR gene activation in response to nitrogen availability, indicating a role for inositol pyrophosphates in these controls. Inositol polyphosphates may be involved in the regulation of chromatin remodeling of transcription. Regulates nuclear mRNA export via inositol phosphate metabolism. Also has lipid kinase activity, transforming the lipid inositol phosphatidylinositol 4,5-bisphosphate (PI(4,5)P2) into phosphatidylinositol 3,4,5-trisphosphate (PI(3,4,5)P3) in the nucleus. Its kinase activity is necessary for the propagation of most [PSI+] prion variants. In Saccharomyces cerevisiae (strain ATCC 204508 / S288c) (Baker's yeast), this protein is Inositol polyphosphate multikinase (ARG82).